The primary structure comprises 118 residues: M-zodatoxin-Lt8p (118 aa).

The signal sequence occupies residues 1–3; the sequence is AES. Residues 4 to 43 constitute a propeptide that is removed on maturation; it reads KPAESEHELAEVEEENELADLEDAVWLEHLADLSDLEEAR.

The protein belongs to the cationic peptide 06 (cytoinsectotoxin) family. As to expression, expressed by the venom gland.

The protein localises to the secreted. Its function is as follows. Insecticidal, cytolytic and antimicrobial peptide. Forms voltage-dependent, ion-permeable channels in membranes. At high concentration causes cell membrane lysis. The protein is M-zodatoxin-Lt8p (cit 1-15) of Lachesana tarabaevi (Spider).